Reading from the N-terminus, the 125-residue chain is Hydrogenase maturation factor HypA (125 aa).

Residue H2 coordinates Ni(2+). Residues C73, C76, C96, and C99 each coordinate Zn(2+).

This sequence belongs to the HypA/HybF family.

Functionally, involved in the maturation of [NiFe] hydrogenases. Required for nickel insertion into the metal center of the hydrogenase. This Methanobrevibacter smithii (strain ATCC 35061 / DSM 861 / OCM 144 / PS) protein is Hydrogenase maturation factor HypA.